We begin with the raw amino-acid sequence, 284 residues long: Tropomyosin alpha-1 chain (284 aa).

An N-acetylmethionine modification is found at methionine 1. Positions 1–40 are disordered; the sequence is MDAIKKKMQMLKLDKENALDRAEQAESDKKASEDRSKQLE. Positions 1–284 form a coiled coil; it reads MDAIKKKMQM…DHALNDMTSI (284 aa). A compositionally biased stretch (basic and acidic residues) spans 12–40; the sequence is KLDKENALDRAEQAESDKKASEDRSKQLE.

As to quaternary structure, homodimer. Heterodimer of an alpha (TPM1, TPM3 or TPM4) and a beta (TPM2) chain.

It localises to the cytoplasm. Its subcellular location is the cytoskeleton. In terms of biological role, binds to actin filaments in muscle and non-muscle cells. Plays a central role, in association with the troponin complex, in the calcium dependent regulation of vertebrate striated muscle contraction. Smooth muscle contraction is regulated by interaction with caldesmon. In non-muscle cells is implicated in stabilizing cytoskeleton actin filaments. This chain is Tropomyosin alpha-1 chain, found in Chelon auratus (Golden grey mullet).